A 316-amino-acid polypeptide reads, in one-letter code: tRNA dimethylallyltransferase (316 aa).

G12–T19 lines the ATP pocket. T14–T19 is a binding site for substrate. Interaction with substrate tRNA regions lie at residues D37–L40 and Q161–R165.

The protein belongs to the IPP transferase family. As to quaternary structure, monomer. Mg(2+) is required as a cofactor.

The enzyme catalyses adenosine(37) in tRNA + dimethylallyl diphosphate = N(6)-dimethylallyladenosine(37) in tRNA + diphosphate. Its function is as follows. Catalyzes the transfer of a dimethylallyl group onto the adenine at position 37 in tRNAs that read codons beginning with uridine, leading to the formation of N6-(dimethylallyl)adenosine (i(6)A). This Idiomarina loihiensis (strain ATCC BAA-735 / DSM 15497 / L2-TR) protein is tRNA dimethylallyltransferase.